A 180-amino-acid chain; its full sequence is Crossover junction endodeoxyribonuclease RuvC (180 aa).

Catalysis depends on residues Asp-7, Glu-66, and Asp-138. Residues Asp-7, Glu-66, and Asp-138 each coordinate Mg(2+).

It belongs to the RuvC family. As to quaternary structure, homodimer which binds Holliday junction (HJ) DNA. The HJ becomes 2-fold symmetrical on binding to RuvC with unstacked arms; it has a different conformation from HJ DNA in complex with RuvA. In the full resolvosome a probable DNA-RuvA(4)-RuvB(12)-RuvC(2) complex forms which resolves the HJ. It depends on Mg(2+) as a cofactor.

The protein resides in the cytoplasm. The catalysed reaction is Endonucleolytic cleavage at a junction such as a reciprocal single-stranded crossover between two homologous DNA duplexes (Holliday junction).. Functionally, the RuvA-RuvB-RuvC complex processes Holliday junction (HJ) DNA during genetic recombination and DNA repair. Endonuclease that resolves HJ intermediates. Cleaves cruciform DNA by making single-stranded nicks across the HJ at symmetrical positions within the homologous arms, yielding a 5'-phosphate and a 3'-hydroxyl group; requires a central core of homology in the junction. The consensus cleavage sequence is 5'-(A/T)TT(C/G)-3'. Cleavage occurs on the 3'-side of the TT dinucleotide at the point of strand exchange. HJ branch migration catalyzed by RuvA-RuvB allows RuvC to scan DNA until it finds its consensus sequence, where it cleaves and resolves the cruciform DNA. In Janthinobacterium sp. (strain Marseille) (Minibacterium massiliensis), this protein is Crossover junction endodeoxyribonuclease RuvC.